The sequence spans 143 residues: Transcriptional regulator MraZ (143 aa).

SpoVT-AbrB domains are found at residues 5–47 (EYRH…TQEE) and 76–119 (ATEC…SEDR).

It belongs to the MraZ family. In terms of assembly, forms oligomers.

The protein resides in the cytoplasm. It is found in the nucleoid. The sequence is that of Transcriptional regulator MraZ from Ligilactobacillus salivarius (strain UCC118) (Lactobacillus salivarius).